The chain runs to 214 residues: Immunoglobulin lambda-like polypeptide 5 (214 aa).

An N-terminal signal peptide occupies residues 1 to 35 (MRPKTGQVGCETPEELGPGPRQRWPLLLLGLAMVA). Positions 98–109 (VFGTGTKVTVLG) are j region. Residues 110 to 214 (QPKANPTVTL…EKTVAPTECS (105 aa)) are c region. In terms of domain architecture, Ig-like C1-type spans 115–209 (PTVTLFPPSS…EGSTVEKTVA (95 aa)). C136 and C195 are disulfide-bonded.

In terms of tissue distribution, contrary to IGLL1, not expressed in pre-B-cells.

It is found in the secreted. This is Immunoglobulin lambda-like polypeptide 5 (IGLL5) from Homo sapiens (Human).